The primary structure comprises 278 residues: MDWLLACKALILGVVEGLTEFLPVSSTGHLIVAGSLLNFTDEHAKTFDVVIQLGAILAVCWEYRRRIGSVVSGLPSRPDARRFTLNVIIATIPAIVLGLLFEKTIKAALFSPVPVAFALVAGGVVILWAESRQRTRGETVARVQNVDDLGALDALKVGLAQCFALIPGMSRSGSTIIGGMLFGLDRRVATEFSFFLAIPIIFGATAYELHKDWHLLSVDALGTFALGFVAAFVSAFACVRWLLRYIAAHDFTAFAWYRIGFGLLILLVGYSGALNWTE.

The next 5 membrane-spanning stretches (helical) occupy residues 85 to 105 (LNVIIATIPAIVLGLLFEKTI), 108 to 128 (ALFSPVPVAFALVAGGVVILW), 188 to 208 (VATEFSFFLAIPIIFGATAYE), 218 to 238 (VDALGTFALGFVAAFVSAFAC), and 254 to 274 (FAWYRIGFGLLILLVGYSGAL).

The protein belongs to the UppP family.

It localises to the cell inner membrane. The enzyme catalyses di-trans,octa-cis-undecaprenyl diphosphate + H2O = di-trans,octa-cis-undecaprenyl phosphate + phosphate + H(+). Catalyzes the dephosphorylation of undecaprenyl diphosphate (UPP). Confers resistance to bacitracin. The chain is Undecaprenyl-diphosphatase 1 from Paraburkholderia xenovorans (strain LB400).